The chain runs to 847 residues: MEPWKQCAQWLIHCKVLPTNHRVTWDSAQVFDLAQTLRDGVLLCQLLNNLRAHSINLKEINLRPQMSQFLCLKNIRTFLTACCETFGMRKSELFEAFDLFDVRDFGKVIETLSRLSRTPIALATGIRPFPTEESINDEDIYKGLPDLIDETLVEDEEDLYDCVYGEDEGGEVYEDLMKAEEAHQPKCPENDIRSCCLAEIKQTEEKYTETLESIEKYFMAPLKRFLTAAEFDSVFINIPELVKLHRNLMQEIHDSIVNKNDQNLYQVFINYKERLVIYGQYCSGVESAISSLDYISKTKEDVKLKLEECSKRANNGKFTLRDLLVVPMQRVLKYHLLLQELVKHTTDPTEKANLKLALDAMKDLAQYVNEVKRDNETLREIKQFQLSIENLNQPVLLFGRPQGDGEIRITTLDKHTKQERHIFLFDLAVIVCKRKGDNYEMKEIIDLQQYKIANNPTTDKENKKWSYGFYLIHTQGQNGLEFYCKTKDLKKKWLEQFEMALSNIRPDYADSNFHDFKMHTFTRVTSCKVCQMLLRGTFYQGYLCFKCGARAHKECLGRVDNCGRVNSGEQGTLKLPEKRTNGLRRTPKQVDPGLPKMQVIRNYSGTPPPALHEGPPLQLQAGDTVELLKGDAHSLFWQGRNLASGEVGFFPSDAVKPCPCVPKPVDYSCQPWYAGAMERLQAETELINRVNSTYLVRHRTKESGEYAISIKYNNEAKHIKILTRDGFFHIAENRKFKSLMELVEYYKHHSLKEGFRTLDTTLQFPYKEPEHSAGQRGNRAGNSLLSPKVLGIAIARYDFCARDMRELSLLKGDVVKIYTKMSANGWWRGEVNGRVGWFPSTYVEEDE.

The region spanning 1–119 is the Calponin-homology (CH) domain; that stretch reads MEPWKQCAQW…ETLSRLSRTP (119 aa). Phosphotyrosine is present on Tyr-141. The DH domain maps to 192-371; sequence IRSCCLAEIK…KDLAQYVNEV (180 aa). The region spanning 400–502 is the PH domain; that stretch reads RPQGDGEIRI…WLEQFEMALS (103 aa). Residues 513-562 form a Phorbol-ester/DAG-type zinc finger; that stretch reads FHDFKMHTFTRVTSCKVCQMLLRGTFYQGYLCFKCGARAHKECLGRVDNC. The interval 560–847 is sufficient for interaction with ROS1; the sequence is DNCGRVNSGE…FPSTYVEEDE (288 aa). The 69-residue stretch at 592–660 folds into the SH3 1 domain; it reads PGLPKMQVIR…PSDAVKPCPC (69 aa). The SH2 domain maps to 672-766; it reads WYAGAMERLQ…TLDTTLQFPY (95 aa). The SH3 2 domain maps to 788–847; it reads KVLGIAIARYDFCARDMRELSLLKGDVVKIYTKMSANGWWRGEVNGRVGWFPSTYVEEDE.

Interacts with the PH domain of SH2B2. Interacts (via SH2 domains) with the phosphorylated form of EPHA2. Interacts with ROS1; constitutive interaction that mediates VAV3 phosphorylation. Phosphorylated. Phosphorylation can be mediated by ROS1. In osteoclasts, undergoes tyrosine phosphorylation in response to CSF1. In terms of tissue distribution, isoform 1 and isoform 3 are widely expressed; both are expressed at very low levels in skeletal muscle. In keratinocytes, isoform 1 is less abundant than isoform 3. Isoform 3 is detected at very low levels, if any, in adrenal gland, bone marrow, spleen, fetal brain and spinal cord; in these tissues, isoform 1 is readily detectable.

Its function is as follows. Exchange factor for GTP-binding proteins RhoA, RhoG and, to a lesser extent, Rac1. Binds physically to the nucleotide-free states of those GTPases. Plays an important role in angiogenesis. Its recruitment by phosphorylated EPHA2 is critical for EFNA1-induced RAC1 GTPase activation and vascular endothelial cell migration and assembly. May be important for integrin-mediated signaling, at least in some cell types. In osteoclasts, along with SYK tyrosine kinase, required for signaling through integrin alpha-v/beta-1 (ITAGV-ITGB1), a crucial event for osteoclast proper cytoskeleton organization and function. This signaling pathway involves RAC1, but not RHO, activation. Necessary for proper wound healing. In the course of wound healing, required for the phagocytotic cup formation preceding macrophage phagocytosis of apoptotic neutrophils. Responsible for integrin beta-2 (ITGB2)-mediated macrophage adhesion and, to a lesser extent, contributes to beta-3 (ITGB3)-mediated adhesion. Does not affect integrin beta-1 (ITGB1)-mediated adhesion. The chain is Guanine nucleotide exchange factor VAV3 (VAV3) from Homo sapiens (Human).